A 413-amino-acid chain; its full sequence is Probable elongation factor 1-gamma 2 (413 aa).

Residues 1–82 (MALVMHTYKG…YVSRKNGDNS (82 aa)) form the GST N-terminal domain. The region spanning 87 to 215 (SLIEYAHIEQ…AKQTEAVPPV (129 aa)) is the GST C-terminal domain. Residues 207–260 (KQTEAVPPVPTKKAPQPAKPKEEPKKAAPVAEAPKPAEEEEAPKPKAKNPLDLL) form a disordered region. The 161-residue stretch at 253 to 413 (AKNPLDLLPP…EALLDAKCFK (161 aa)) folds into the EF-1-gamma C-terminal domain.

EF-1 is composed of four subunits: alpha, beta, delta, and gamma.

Probably plays a role in anchoring the complex to other cellular components. This chain is Probable elongation factor 1-gamma 2, found in Arabidopsis thaliana (Mouse-ear cress).